Reading from the N-terminus, the 79-residue chain is Small ribosomal subunit protein bS16cz (79 aa).

This sequence belongs to the bacterial ribosomal protein bS16 family.

It localises to the plastid. The protein resides in the chloroplast. The sequence is that of Small ribosomal subunit protein bS16cz from Arabidopsis thaliana (Mouse-ear cress).